The following is a 279-amino-acid chain: Putative pyruvate, phosphate dikinase regulatory protein (279 aa).

153-160 is an ADP binding site; the sequence is GISRTSKT.

This sequence belongs to the pyruvate, phosphate/water dikinase regulatory protein family. PDRP subfamily.

The enzyme catalyses N(tele)-phospho-L-histidyl/L-threonyl-[pyruvate, phosphate dikinase] + ADP = N(tele)-phospho-L-histidyl/O-phospho-L-threonyl-[pyruvate, phosphate dikinase] + AMP + H(+). It carries out the reaction N(tele)-phospho-L-histidyl/O-phospho-L-threonyl-[pyruvate, phosphate dikinase] + phosphate + H(+) = N(tele)-phospho-L-histidyl/L-threonyl-[pyruvate, phosphate dikinase] + diphosphate. Bifunctional serine/threonine kinase and phosphorylase involved in the regulation of the pyruvate, phosphate dikinase (PPDK) by catalyzing its phosphorylation/dephosphorylation. The polypeptide is Putative pyruvate, phosphate dikinase regulatory protein (Bartonella bacilliformis (strain ATCC 35685 / KC583 / Herrer 020/F12,63)).